A 202-amino-acid chain; its full sequence is IMP cyclohydrolase (202 aa).

A disordered region spans residues 29 to 52 (VQRDGTVTVEPTPDAPETDNPYIS).

Belongs to the archaeal IMP cyclohydrolase family.

The catalysed reaction is IMP + H2O = 5-formamido-1-(5-phospho-D-ribosyl)imidazole-4-carboxamide. The protein operates within purine metabolism; IMP biosynthesis via de novo pathway; IMP from 5-formamido-1-(5-phospho-D-ribosyl)imidazole-4-carboxamide: step 1/1. Functionally, catalyzes the cyclization of 5-formylamidoimidazole-4-carboxamide ribonucleotide to IMP. In Haloarcula marismortui (strain ATCC 43049 / DSM 3752 / JCM 8966 / VKM B-1809) (Halobacterium marismortui), this protein is IMP cyclohydrolase.